A 564-amino-acid polypeptide reads, in one-letter code: Phenylalanine--tRNA ligase beta subunit (564 aa).

A B5 domain is found at 286–362 (YFQNMLEVNV…IGMGLDSFKP (77 aa)). Mg(2+)-binding residues include Asp-340, Asp-346, Glu-349, and Glu-350.

The protein belongs to the phenylalanyl-tRNA synthetase beta subunit family. Type 2 subfamily. In terms of assembly, tetramer of two alpha and two beta subunits. The cofactor is Mg(2+).

It is found in the cytoplasm. It catalyses the reaction tRNA(Phe) + L-phenylalanine + ATP = L-phenylalanyl-tRNA(Phe) + AMP + diphosphate + H(+). In Borrelia turicatae (strain 91E135), this protein is Phenylalanine--tRNA ligase beta subunit.